The primary structure comprises 476 residues: Aspartyl/glutamyl-tRNA(Asn/Gln) amidotransferase subunit B (476 aa).

The protein belongs to the GatB/GatE family. GatB subfamily. Heterotrimer of A, B and C subunits.

The catalysed reaction is L-glutamyl-tRNA(Gln) + L-glutamine + ATP + H2O = L-glutaminyl-tRNA(Gln) + L-glutamate + ADP + phosphate + H(+). The enzyme catalyses L-aspartyl-tRNA(Asn) + L-glutamine + ATP + H2O = L-asparaginyl-tRNA(Asn) + L-glutamate + ADP + phosphate + 2 H(+). Functionally, allows the formation of correctly charged Asn-tRNA(Asn) or Gln-tRNA(Gln) through the transamidation of misacylated Asp-tRNA(Asn) or Glu-tRNA(Gln) in organisms which lack either or both of asparaginyl-tRNA or glutaminyl-tRNA synthetases. The reaction takes place in the presence of glutamine and ATP through an activated phospho-Asp-tRNA(Asn) or phospho-Glu-tRNA(Gln). This Listeria innocua serovar 6a (strain ATCC BAA-680 / CLIP 11262) protein is Aspartyl/glutamyl-tRNA(Asn/Gln) amidotransferase subunit B.